The following is a 663-amino-acid chain: Ras and EF-hand domain-containing protein (663 aa).

EF-hand domains are found at residues 1–33 (MNHA…CREL) and 35–70 (VPAD…VSEA). Ca(2+)-binding residues include aspartate 14, asparagine 16, serine 18, arginine 20, aspartate 25, aspartate 48, aspartate 50, aspartate 52, tyrosine 54, and aspartate 59. The stretch at 122 to 297 (ELLLQQFEDL…LKKMVMEFQS (176 aa)) forms a coiled coil. Residues 324 to 336 (SQENASTKRQLSP) show a composition bias toward polar residues. Residues 324 to 343 (SQENASTKRQLSPRNEVLPR) are disordered. Residues 477 to 482 (GSGKSS), 580 to 583 (NKVD), and 615 to 616 (AK) contribute to the GTP site.

It belongs to the small GTPase superfamily. Rab family. In terms of assembly, homodimer.

The protein localises to the cytoplasm. It is found in the perinuclear region. In terms of biological role, binds predominantly GDP, and also GTP. This is Ras and EF-hand domain-containing protein (rasef) from Danio rerio (Zebrafish).